A 493-amino-acid polypeptide reads, in one-letter code: Glutamyl-tRNA(Gln) amidotransferase subunit A (493 aa).

Active-site charge relay system residues include Lys78 and Ser158. The active-site Acyl-ester intermediate is Ser182.

This sequence belongs to the amidase family. GatA subfamily. In terms of assembly, heterotrimer of A, B and C subunits.

The enzyme catalyses L-glutamyl-tRNA(Gln) + L-glutamine + ATP + H2O = L-glutaminyl-tRNA(Gln) + L-glutamate + ADP + phosphate + H(+). Functionally, allows the formation of correctly charged Gln-tRNA(Gln) through the transamidation of misacylated Glu-tRNA(Gln) in organisms which lack glutaminyl-tRNA synthetase. The reaction takes place in the presence of glutamine and ATP through an activated gamma-phospho-Glu-tRNA(Gln). The chain is Glutamyl-tRNA(Gln) amidotransferase subunit A from Methylorubrum extorquens (strain PA1) (Methylobacterium extorquens).